The following is a 1043-amino-acid chain: MTLLEGSVGVEDLVLLEPLEQESLIRNLQLRYEKKEIYTYIGNVLVSVNPYQQLPIYDLEFVAKYRDYTFYELKPHIYALANMAYQSLRDRDRDQCILITGESGAGKTEASKLVMSYVAAVCGKGEQVNSVKEQLLQSNPVLEAFGNAKTIRNNNSSRFGKYMDIEFDFKGFPLGGVITNYLLEKSRVVKQLEGERNFHIFYQLLAGADAQLLKALKLERDTGGYAYLNPDTSRVDGMDDDANFKVLQSAMTVIGFSDEEIRQVLEVAALVLKLGNVELINEFQANGVPASGIRDGRGVQEIGELVGLNSVELERALCSRTMETAKEKVVTTLNVIQAQYARDALAKNIYSRLFNWLVNRINESIKVGTGEKRKVMGVLDIYGFEILEDNSFEQFVINYCNEKLQQVFIEMTLKEEQEEYKREGIPWVKVEYFDNGIICNLIEHNQRGILAMLDEECLRPGVVSDSTFLAKLNQLFSKHSHYESKVTQNAQRQYDHSMGLSCFRICHYAGKVTYNVNSFIDKNNDLLFRDLSQAMWKARHPLLRSLFPEGDPKQASLKRPPTAGAQFKSSVTTLMKNLYSKNPNYIRCIKPNEHQQRGHFSFELVSVQAQYLGLLENVRVRRAGYAYRQAYGSFLERYRLLSRSTWPRWNGGDQEGVEKVLGELSMSSEELAFGKTKIFIRSPKTLFYLEEQRRLRLQQLATLIQKTYRGWRCRTHYQLMRKSQIVISSWFRGNMQKKHYRKMKASALLIQAFVRGWKARKNYRKYFRSGAALILSNFIYKSMVQKFLLGLKNDLPSPSILDKKWPSAPYKYFNTANHELQRLFHQWKCKKFRDQLSPKQVEVLREKLCASELFKGKKASYPQSVPIPFHGDYIGLQRNPKLQKLKGGEEGPILMAETVVKVNRGNAKTSSRILLLTKGHVIITDMKNPQAKTVIPLNSLAGVSVTSFKDGLFSLHLSEISSVGSKGEFLLVSEHVIELLTKICRATLDATQMQLPVTVTEEFSVKFKEGSLTVKVIQGPGGGGTGKLSFKKKGSRCLEVTVQ.

The Myosin motor domain maps to 8–694; it reads VGVEDLVLLE…TLFYLEEQRR (687 aa). 101–108 serves as a coordination point for ATP; sequence GESGAGKT. Residues 571–593 are actin-binding; the sequence is VTTLMKNLYSKNPNYIRCIKPNE. IQ domains are found at residues 697 to 719, 720 to 742, and 743 to 772; these read LQQL…HYQL, MRKS…HYRK, and MKAS…SGAA. Residues 858-1042 enclose the TH1 domain; the sequence is KASYPQSVPI…KGSRCLEVTV (185 aa).

This sequence belongs to the TRAFAC class myosin-kinesin ATPase superfamily. Myosin family. In terms of processing, phosphorylated by ALPK1.

Functionally, involved in directing the movement of organelles along actin filaments. The chain is Unconventional myosin-Ia (MYO1A) from Bos taurus (Bovine).